We begin with the raw amino-acid sequence, 279 residues long: Tryptophan 2,3-dioxygenase (279 aa).

Substrate is bound by residues 48–52 (FIVIH), tyrosine 110, and arginine 114. Histidine 237 contacts heme. A substrate-binding site is contributed by threonine 251.

The protein belongs to the tryptophan 2,3-dioxygenase family. In terms of assembly, homotetramer. Requires heme as cofactor.

The catalysed reaction is L-tryptophan + O2 = N-formyl-L-kynurenine. Its pathway is amino-acid degradation; L-tryptophan degradation via kynurenine pathway; L-kynurenine from L-tryptophan: step 1/2. Heme-dependent dioxygenase that catalyzes the oxidative cleavage of the L-tryptophan (L-Trp) pyrrole ring and converts L-tryptophan to N-formyl-L-kynurenine. Catalyzes the oxidative cleavage of the indole moiety. This Bacillus cereus (strain ZK / E33L) protein is Tryptophan 2,3-dioxygenase.